A 209-amino-acid chain; its full sequence is Ribosomal RNA large subunit methyltransferase E (209 aa).

Residues Gly-63, Trp-65, Asp-83, Asp-99, and Asp-124 each coordinate S-adenosyl-L-methionine. Lys-164 acts as the Proton acceptor in catalysis.

It belongs to the class I-like SAM-binding methyltransferase superfamily. RNA methyltransferase RlmE family.

The protein localises to the cytoplasm. It carries out the reaction uridine(2552) in 23S rRNA + S-adenosyl-L-methionine = 2'-O-methyluridine(2552) in 23S rRNA + S-adenosyl-L-homocysteine + H(+). In terms of biological role, specifically methylates the uridine in position 2552 of 23S rRNA at the 2'-O position of the ribose in the fully assembled 50S ribosomal subunit. This is Ribosomal RNA large subunit methyltransferase E from Shewanella putrefaciens (strain CN-32 / ATCC BAA-453).